We begin with the raw amino-acid sequence, 267 residues long: Phosphate import ATP-binding protein PstB 2 (267 aa).

The 242-residue stretch at Leu-21–Val-262 folds into the ABC transporter domain. Position 53–60 (Gly-53–Ser-60) interacts with ATP.

Belongs to the ABC transporter superfamily. Phosphate importer (TC 3.A.1.7) family. The complex is composed of two ATP-binding proteins (PstB), two transmembrane proteins (PstC and PstA) and a solute-binding protein (PstS).

The protein resides in the cell membrane. The enzyme catalyses phosphate(out) + ATP + H2O = ADP + 2 phosphate(in) + H(+). Its function is as follows. Part of the ABC transporter complex PstSACB involved in phosphate import. Responsible for energy coupling to the transport system. This chain is Phosphate import ATP-binding protein PstB 2, found in Streptococcus pyogenes serotype M18 (strain MGAS8232).